Here is a 297-residue protein sequence, read N- to C-terminus: ATP synthase gamma chain (297 aa).

Belongs to the ATPase gamma chain family. In terms of assembly, F-type ATPases have 2 components, CF(1) - the catalytic core - and CF(0) - the membrane proton channel. CF(1) has five subunits: alpha(3), beta(3), gamma(1), delta(1), epsilon(1). CF(0) has three main subunits: a, b and c.

The protein localises to the cell membrane. Functionally, produces ATP from ADP in the presence of a proton gradient across the membrane. The gamma chain is believed to be important in regulating ATPase activity and the flow of protons through the CF(0) complex. This is ATP synthase gamma chain from Renibacterium salmoninarum (strain ATCC 33209 / DSM 20767 / JCM 11484 / NBRC 15589 / NCIMB 2235).